A 256-amino-acid chain; its full sequence is Coiled-coil domain-containing protein 90B, mitochondrial (256 aa).

The N-terminal 42 residues, 1 to 42, are a transit peptide targeting the mitochondrion; it reads MRNRWIWRFLRPECSGIRWISSPHGRLSPALRRGFLTTTTKS. Positions 106–164 form a coiled coil; sequence AQQEITIQQLMAHLDSIRKDMVILEKSEFANLRAENEKMKIELDQVKQQLINETSRIRA. Residues 231 to 253 traverse the membrane as a helical segment; that stretch reads TIRYLAASVFTCLAIALGFYRFW.

This sequence belongs to the CCDC90 family. Interacts with MCU.

The protein localises to the mitochondrion membrane. The protein is Coiled-coil domain-containing protein 90B, mitochondrial (Ccdc90b) of Rattus norvegicus (Rat).